Consider the following 362-residue polypeptide: MSNQVPEKMQAVVCHGPHDYRLEEVAVPQRKPGEALIRVEAVGICASDLKCYHGAAKFWGDENRPAWAETMVIPGHEFVGRVVELDDEAAQRWGIAVGDRVVSEQIVPCWECLFCKRGQYHMCQPHDLYGFKRRTPGAMASYMVYPAEALVHKVSPDIPAQHAAFAEPLSCSLHAVERAQITFEDTVVVAGCGPIGLGMIAGAKAKSPMRVIALDMAPDKLKLAEKCGADLTINIAEQDAEKIIKDLTGGYGADVYIEGTGHTSAVPQGLNLLRKLGRYVEYGVFGSDVTVDWSIISDDKELDVLGAHLGPYCWPAAIKMIESGALPMDEICTHQFPLTEFQKGLDLVASGKESVKVSLIPA.

The Zn(2+) site is built by C45, H76, E77, C109, C112, C115, and C123. Residues I195 and D215 each coordinate NAD(+).

It belongs to the zinc-containing alcohol dehydrogenase family. The cofactor is Zn(2+).

The enzyme catalyses erythritol + NAD(+) = D-erythrulose + NADH + H(+). The catalysed reaction is L-threitol + NAD(+) = L-erythrulose + NADH + H(+). It participates in carbohydrate metabolism; erythritol degradation. The protein operates within carbohydrate metabolism; L-threitol degradation. In terms of biological role, catalyzes the NAD-dependent reversible oxidation of erythritol and L-threitol. Involved in the degradation pathways of erythritol and L-threitol, that allow M.smegmatis to grow on these compounds as the sole carbon source. This is Erythritol/L-threitol dehydrogenase from Mycolicibacterium smegmatis (strain ATCC 700084 / mc(2)155) (Mycobacterium smegmatis).